A 423-amino-acid polypeptide reads, in one-letter code: Serine--tRNA ligase (423 aa).

228 to 230 serves as a coordination point for L-serine; it reads TSE. Residue 259–261 coordinates ATP; sequence RLE. Glutamate 282 is a binding site for L-serine. 346–349 lines the ATP pocket; that stretch reads EISS. Residue serine 384 participates in L-serine binding.

The protein belongs to the class-II aminoacyl-tRNA synthetase family. Type-1 seryl-tRNA synthetase subfamily. In terms of assembly, homodimer. The tRNA molecule binds across the dimer.

Its subcellular location is the cytoplasm. It carries out the reaction tRNA(Ser) + L-serine + ATP = L-seryl-tRNA(Ser) + AMP + diphosphate + H(+). It catalyses the reaction tRNA(Sec) + L-serine + ATP = L-seryl-tRNA(Sec) + AMP + diphosphate + H(+). It participates in aminoacyl-tRNA biosynthesis; selenocysteinyl-tRNA(Sec) biosynthesis; L-seryl-tRNA(Sec) from L-serine and tRNA(Sec): step 1/1. Catalyzes the attachment of serine to tRNA(Ser). Is also able to aminoacylate tRNA(Sec) with serine, to form the misacylated tRNA L-seryl-tRNA(Sec), which will be further converted into selenocysteinyl-tRNA(Sec). The chain is Serine--tRNA ligase from Ehrlichia canis (strain Jake).